The following is a 193-amino-acid chain: MIGKLTGTVTDLCQESLILDVGGVGYNVFTTRRLIDSLRTGQNLSLYIEHYFLENINKLYGFECRKSQEVARMLSKVKGINYKIALSLLNHLELGELILAIQNKDESRLKIKGIGEKLVKRIITETYEDFLKLDSHLSGIASSTNVHIASEAVSALVKLGFQHKPSHKVVMEIMTKRPAIEIAELITLALKML.

The segment at 1–63 (MIGKLTGTVT…ENINKLYGFE (63 aa)) is domain I. A domain II region spans residues 64-148 (CRKSQEVARM…GIASSTNVHI (85 aa)). The flexible linker stretch occupies residues 149–150 (AS). Residues 150 to 193 (SEAVSALVKLGFQHKPSHKVVMEIMTKRPAIEIAELITLALKML) are domain III.

It belongs to the RuvA family. As to quaternary structure, homotetramer. Forms an RuvA(8)-RuvB(12)-Holliday junction (HJ) complex. HJ DNA is sandwiched between 2 RuvA tetramers; dsDNA enters through RuvA and exits via RuvB. An RuvB hexamer assembles on each DNA strand where it exits the tetramer. Each RuvB hexamer is contacted by two RuvA subunits (via domain III) on 2 adjacent RuvB subunits; this complex drives branch migration. In the full resolvosome a probable DNA-RuvA(4)-RuvB(12)-RuvC(2) complex forms which resolves the HJ.

The protein resides in the cytoplasm. The RuvA-RuvB-RuvC complex processes Holliday junction (HJ) DNA during genetic recombination and DNA repair, while the RuvA-RuvB complex plays an important role in the rescue of blocked DNA replication forks via replication fork reversal (RFR). RuvA specifically binds to HJ cruciform DNA, conferring on it an open structure. The RuvB hexamer acts as an ATP-dependent pump, pulling dsDNA into and through the RuvAB complex. HJ branch migration allows RuvC to scan DNA until it finds its consensus sequence, where it cleaves and resolves the cruciform DNA. In Neorickettsia sennetsu (strain ATCC VR-367 / Miyayama) (Ehrlichia sennetsu), this protein is Holliday junction branch migration complex subunit RuvA.